A 134-amino-acid polypeptide reads, in one-letter code: Profilin (134 aa).

This sequence belongs to the profilin family. In terms of assembly, occurs in many kinds of cells as a complex with monomeric actin in a 1:1 ratio.

Its subcellular location is the cytoplasm. It localises to the cytoskeleton. Functionally, binds to actin and affects the structure of the cytoskeleton. At high concentrations, profilin prevents the polymerization of actin, whereas it enhances it at low concentrations. By binding to PIP2, it inhibits the formation of IP3 and DG. The chain is Profilin from Brassica napus (Rape).